The sequence spans 73 residues: Protein SlyX homolog (73 aa).

This sequence belongs to the SlyX family.

This is Protein SlyX homolog from Histophilus somni (strain 129Pt) (Haemophilus somnus).